A 279-amino-acid chain; its full sequence is Tryptophan 2,3-dioxygenase (279 aa).

Residues 48–52 (FIVIH), Tyr110, and Arg114 each bind substrate. His237 provides a ligand contact to heme. Position 251 (Thr251) interacts with substrate.

Belongs to the tryptophan 2,3-dioxygenase family. Homotetramer. Heme serves as cofactor.

It carries out the reaction L-tryptophan + O2 = N-formyl-L-kynurenine. Its pathway is amino-acid degradation; L-tryptophan degradation via kynurenine pathway; L-kynurenine from L-tryptophan: step 1/2. In terms of biological role, heme-dependent dioxygenase that catalyzes the oxidative cleavage of the L-tryptophan (L-Trp) pyrrole ring and converts L-tryptophan to N-formyl-L-kynurenine. Catalyzes the oxidative cleavage of the indole moiety. The protein is Tryptophan 2,3-dioxygenase of Bacillus anthracis.